A 487-amino-acid chain; its full sequence is UDP-N-acetylmuramate--L-alanine ligase (487 aa).

126 to 132 (GTHGKTT) contributes to the ATP binding site.

Belongs to the MurCDEF family.

The protein localises to the cytoplasm. It catalyses the reaction UDP-N-acetyl-alpha-D-muramate + L-alanine + ATP = UDP-N-acetyl-alpha-D-muramoyl-L-alanine + ADP + phosphate + H(+). Its pathway is cell wall biogenesis; peptidoglycan biosynthesis. Functionally, cell wall formation. In Proteus mirabilis (strain HI4320), this protein is UDP-N-acetylmuramate--L-alanine ligase.